Consider the following 477-residue polypeptide: Argininosuccinate lyase (477 aa).

Belongs to the lyase 1 family. Argininosuccinate lyase subfamily.

The protein localises to the cytoplasm. The catalysed reaction is 2-(N(omega)-L-arginino)succinate = fumarate + L-arginine. It participates in amino-acid biosynthesis; L-arginine biosynthesis; L-arginine from L-ornithine and carbamoyl phosphate: step 3/3. The chain is Argininosuccinate lyase from Acinetobacter baumannii (strain AB307-0294).